The chain runs to 217 residues: Twisted gastrulation protein homolog 1-A (217 aa).

Residues 1–26 (MRPALFLCPVLISVLFLLSSLSLISG) form the signal peptide. N-linked (GlcNAc...) asparagine glycans are attached at residues N53 and N147.

The protein belongs to the twisted gastrulation protein family.

It localises to the secreted. Its function is as follows. Involved in dorsal-ventral patterning. Appears to function predominantly as a ventralizing factor, through its actions as a BMP signaling agonist, acting through both chd-dependent and chd-independent mechanisms. May also antagonize BMP signaling, probably via formation of ternary complexes with chd and BMPs, resulting in dorsalization. The sequence is that of Twisted gastrulation protein homolog 1-A (twsg1a) from Danio rerio (Zebrafish).